A 209-amino-acid chain; its full sequence is N-acetyltransferase aca1 (209 aa).

The N-acetyltransferase domain occupies 26-202 (TNVKNKEELL…DAYIYQYHFP (177 aa)). Substrate is bound at residue N118. CoA is bound at residue 128-133 (RSKGIG). A substrate-binding site is contributed by 155–156 (NL).

It belongs to the acetyltransferase family. Homodimer.

It is found in the cytoplasm. Its subcellular location is the mitochondrion. It carries out the reaction L-glutamate 5-semialdehyde + acetyl-CoA = N-acetyl-L-glutamate 5-semialdehyde + CoA + H(+). Functionally, N-acetyltransferase involved in oxidative stress resistance. Acetylates the toxic proline metabolism intermediate (S)-1-pyrroline-5-carboxylate (P5C), or more likely its spontaneously forming tautomer glutamate-5-semialdehyde (GSA) into N-acetyl-GSA for arginine synthesis in the mitochondria. P5C has been shown to increase the levels of reactive oxygen species (ROS) in the cell by inhibiting the function of the respiratory chain in the mitochondria. The enzyme is able to reduce intracellular ROS levels under P5C-induced oxidative stress and protects cells from damage by oxidative stress. Also acetylates and thereby detoxifies the proline analog azetidine-2-carboxylate (AZC), however it is unlikely that AZC is a natural substrate as it occurs only in plants belonging to the Lilaceae family. The chain is N-acetyltransferase aca1 from Schizosaccharomyces pombe (strain 972 / ATCC 24843) (Fission yeast).